Consider the following 298-residue polypeptide: MRKTVRKNKQVKRELALLEKEKEEIESFTKVSKTVENKQSINSNWNVTKEKIKNKNNAYQKKKEAKLKLKSATPYTSTKVIEEKKPHIKDFNQLCQEHNIISPIDDNLVSPTQKEIDNLNESSKFFSIDCKIIEIEGNKGTLGKVCIANQNGQIIYEKIVKPMDKIVDFRTKFTGLTRDKVQREGTDFLQVQKEVEKILRHKILVGHDLVHDLKNLKLAHKKKLLRDATQFTKFFNPDTNSEDSLKSIAKRELNFSPDNWDPNGKRDTIINVILYKQNQKEWEAFINNKFYGQPIDKN.

Residues M1–T73 adopt a coiled-coil conformation. In terms of domain architecture, Exonuclease spans F125–Y275.

The protein belongs to the REXO4 family.

The protein localises to the nucleus. In Dictyostelium discoideum (Social amoeba), this protein is RNA exonuclease 4 (rexo4).